The primary structure comprises 65 residues: Large ribosomal subunit protein bL35 (65 aa).

The protein belongs to the bacterial ribosomal protein bL35 family.

This chain is Large ribosomal subunit protein bL35, found in Yersinia enterocolitica serotype O:8 / biotype 1B (strain NCTC 13174 / 8081).